Here is a 369-residue protein sequence, read N- to C-terminus: Glutamate 5-kinase (369 aa).

Lys-9 lines the ATP pocket. Substrate-binding residues include Ser-49, Asp-136, and Asn-148. Residues 168–169 and 210–216 contribute to the ATP site; these read TD and TGGMLTK. The PUA domain occupies 275–355; sequence QGSIWVDKGA…KGVLIYRDDW (81 aa).

This sequence belongs to the glutamate 5-kinase family.

It localises to the cytoplasm. The enzyme catalyses L-glutamate + ATP = L-glutamyl 5-phosphate + ADP. Its pathway is amino-acid biosynthesis; L-proline biosynthesis; L-glutamate 5-semialdehyde from L-glutamate: step 1/2. Its function is as follows. Catalyzes the transfer of a phosphate group to glutamate to form L-glutamate 5-phosphate. In Streptococcus pneumoniae serotype 2 (strain D39 / NCTC 7466), this protein is Glutamate 5-kinase.